A 269-amino-acid polypeptide reads, in one-letter code: 4-hydroxy-tetrahydrodipicolinate reductase (269 aa).

NAD(+)-binding positions include 8 to 13 (GAAGRM) and E34. R35 is an NADP(+) binding site. Residues 98-100 (GTT) and 122-125 (APNY) each bind NAD(+). Residue H155 is the Proton donor/acceptor of the active site. H156 contributes to the (S)-2,3,4,5-tetrahydrodipicolinate binding site. K159 (proton donor) is an active-site residue. 165-166 (GT) is a (S)-2,3,4,5-tetrahydrodipicolinate binding site.

This sequence belongs to the DapB family.

The protein resides in the cytoplasm. It catalyses the reaction (S)-2,3,4,5-tetrahydrodipicolinate + NAD(+) + H2O = (2S,4S)-4-hydroxy-2,3,4,5-tetrahydrodipicolinate + NADH + H(+). The enzyme catalyses (S)-2,3,4,5-tetrahydrodipicolinate + NADP(+) + H2O = (2S,4S)-4-hydroxy-2,3,4,5-tetrahydrodipicolinate + NADPH + H(+). It participates in amino-acid biosynthesis; L-lysine biosynthesis via DAP pathway; (S)-tetrahydrodipicolinate from L-aspartate: step 4/4. In terms of biological role, catalyzes the conversion of 4-hydroxy-tetrahydrodipicolinate (HTPA) to tetrahydrodipicolinate. The polypeptide is 4-hydroxy-tetrahydrodipicolinate reductase (Aliivibrio fischeri (strain ATCC 700601 / ES114) (Vibrio fischeri)).